The primary structure comprises 1298 residues: Phosphoribosylformylglycinamidine synthase (1298 aa).

A disordered region spans residues 303-327 (FPGAATGSGGEIRDEGATGRGAKPK). ATP-binding positions include 305–316 (GAATGSGGEIRD), 384–386 (TGY), and A676. 4 residues coordinate Mg(2+): D677, E716, N720, and D884. S886 serves as a coordination point for ATP. Positions 1045 to 1298 (VAVLREQGVN…MFRNARAWVN (254 aa)) constitute a Glutamine amidotransferase type-1 domain. Catalysis depends on C1138, which acts as the Nucleophile. Active-site residues include H1263 and E1265.

This sequence in the N-terminal section; belongs to the FGAMS family. Monomer.

It is found in the cytoplasm. The catalysed reaction is N(2)-formyl-N(1)-(5-phospho-beta-D-ribosyl)glycinamide + L-glutamine + ATP + H2O = 2-formamido-N(1)-(5-O-phospho-beta-D-ribosyl)acetamidine + L-glutamate + ADP + phosphate + H(+). It functions in the pathway purine metabolism; IMP biosynthesis via de novo pathway; 5-amino-1-(5-phospho-D-ribosyl)imidazole from N(2)-formyl-N(1)-(5-phospho-D-ribosyl)glycinamide: step 1/2. Functionally, phosphoribosylformylglycinamidine synthase involved in the purines biosynthetic pathway. Catalyzes the ATP-dependent conversion of formylglycinamide ribonucleotide (FGAR) and glutamine to yield formylglycinamidine ribonucleotide (FGAM) and glutamate. The sequence is that of Phosphoribosylformylglycinamidine synthase from Pseudomonas syringae pv. syringae (strain B728a).